A 277-amino-acid polypeptide reads, in one-letter code: Phosphoenolpyruvate synthase regulatory protein (277 aa).

157–164 (GVSRCGKT) lines the ADP pocket.

This sequence belongs to the pyruvate, phosphate/water dikinase regulatory protein family. PSRP subfamily.

The enzyme catalyses [pyruvate, water dikinase] + ADP = [pyruvate, water dikinase]-phosphate + AMP + H(+). The catalysed reaction is [pyruvate, water dikinase]-phosphate + phosphate + H(+) = [pyruvate, water dikinase] + diphosphate. Functionally, bifunctional serine/threonine kinase and phosphorylase involved in the regulation of the phosphoenolpyruvate synthase (PEPS) by catalyzing its phosphorylation/dephosphorylation. The polypeptide is Phosphoenolpyruvate synthase regulatory protein (Escherichia fergusonii (strain ATCC 35469 / DSM 13698 / CCUG 18766 / IAM 14443 / JCM 21226 / LMG 7866 / NBRC 102419 / NCTC 12128 / CDC 0568-73)).